The sequence spans 590 residues: Aspartate--tRNA(Asp/Asn) ligase (590 aa).

Glu-175 is a binding site for L-aspartate. The tract at residues 199-202 (QQYK) is aspartate. 2 residues coordinate L-aspartate: Arg-221 and His-450. 221–223 (RDE) contributes to the ATP binding site. Residue Glu-484 participates in ATP binding. Arg-491 serves as a coordination point for L-aspartate. Position 536–539 (536–539 (GVDR)) interacts with ATP.

The protein belongs to the class-II aminoacyl-tRNA synthetase family. Type 1 subfamily. Homodimer.

The protein resides in the cytoplasm. It catalyses the reaction tRNA(Asx) + L-aspartate + ATP = L-aspartyl-tRNA(Asx) + AMP + diphosphate. Functionally, aspartyl-tRNA synthetase with relaxed tRNA specificity since it is able to aspartylate not only its cognate tRNA(Asp) but also tRNA(Asn). Reaction proceeds in two steps: L-aspartate is first activated by ATP to form Asp-AMP and then transferred to the acceptor end of tRNA(Asp/Asn). The sequence is that of Aspartate--tRNA(Asp/Asn) ligase from Rhodopseudomonas palustris (strain BisA53).